The primary structure comprises 286 residues: Pantothenate synthetase (286 aa).

Methionine 30–histidine 37 contributes to the ATP binding site. Histidine 37 serves as the catalytic Proton donor. A (R)-pantoate-binding site is contributed by glutamine 61. A beta-alanine-binding site is contributed by glutamine 61. Glycine 147–aspartate 150 is an ATP binding site. Glutamine 153 serves as a coordination point for (R)-pantoate. Methionine 184–arginine 187 lines the ATP pocket.

The protein belongs to the pantothenate synthetase family. As to quaternary structure, homodimer.

The protein localises to the cytoplasm. The enzyme catalyses (R)-pantoate + beta-alanine + ATP = (R)-pantothenate + AMP + diphosphate + H(+). The protein operates within cofactor biosynthesis; (R)-pantothenate biosynthesis; (R)-pantothenate from (R)-pantoate and beta-alanine: step 1/1. Its function is as follows. Catalyzes the condensation of pantoate with beta-alanine in an ATP-dependent reaction via a pantoyl-adenylate intermediate. This chain is Pantothenate synthetase, found in Syntrophus aciditrophicus (strain SB).